Consider the following 858-residue polypeptide: Coiled-coil and C2 domain-containing protein 1B (858 aa).

5 disordered regions span residues Val-112–Gln-164, Ala-180–Gly-199, Glu-204–Ser-284, Val-329–Ala-352, and Glu-470–Val-533. A compositionally biased stretch (acidic residues) spans Gly-114–Glu-143. The span at Ala-153–Gln-164 shows a compositional bias: low complexity. The stretch at Leu-166–Arg-212 forms a coiled coil. Positions Glu-186 to Gly-199 are enriched in basic and acidic residues. A Phosphoserine modification is found at Ser-209. The span at Pro-520–Ser-532 shows a compositional bias: low complexity. A Phosphoserine modification is found at Ser-593. At Thr-596 the chain carries Phosphothreonine. Residues Arg-611–Leu-635 adopt a coiled-coil conformation. In terms of domain architecture, C2 spans Asp-676–Val-815.

This sequence belongs to the CC2D1 family. Interacts with CHMP4B. In terms of tissue distribution, widely distributed in brain and peripheral tissues.

The protein resides in the nucleus. Transcription factor that binds specifically to the DRE (dual repressor element) and represses HTR1A gene transcription in neuronal cells. This chain is Coiled-coil and C2 domain-containing protein 1B (CC2D1B), found in Homo sapiens (Human).